Here is a 1102-residue protein sequence, read N- to C-terminus: DNA-directed RNA polymerase subunit beta (1102 aa).

A disordered region spans residues 1076–1102 (IDSQRRAPNRPTYESLHTEEDLEEEEV).

This sequence belongs to the RNA polymerase beta chain family. In cyanobacteria the RNAP catalytic core is composed of 2 alpha, 1 beta, 1 beta', 1 gamma and 1 omega subunit. When a sigma factor is associated with the core the holoenzyme is formed, which can initiate transcription.

The catalysed reaction is RNA(n) + a ribonucleoside 5'-triphosphate = RNA(n+1) + diphosphate. DNA-dependent RNA polymerase catalyzes the transcription of DNA into RNA using the four ribonucleoside triphosphates as substrates. This chain is DNA-directed RNA polymerase subunit beta, found in Synechocystis sp. (strain ATCC 27184 / PCC 6803 / Kazusa).